The following is a 331-amino-acid chain: Ketol-acid reductoisomerase (NADP(+)) (331 aa).

The KARI N-terminal Rossmann domain maps to 2-182; it reads IKKYYDADCN…GAGRAGILET (181 aa). Residues 25–28, R48, and S51 each bind NADP(+); that span reads YGSQ. H108 is an active-site residue. G134 contributes to the NADP(+) binding site. The KARI C-terminal knotted domain occupies 183 to 329; the sequence is TFREETETDL…AELRKMMSWI (147 aa). Mg(2+) contacts are provided by D191, E195, E227, and E231. Position 252 (S252) interacts with substrate.

Belongs to the ketol-acid reductoisomerase family. Mg(2+) serves as cofactor.

The catalysed reaction is (2R)-2,3-dihydroxy-3-methylbutanoate + NADP(+) = (2S)-2-acetolactate + NADPH + H(+). The enzyme catalyses (2R,3R)-2,3-dihydroxy-3-methylpentanoate + NADP(+) = (S)-2-ethyl-2-hydroxy-3-oxobutanoate + NADPH + H(+). Its pathway is amino-acid biosynthesis; L-isoleucine biosynthesis; L-isoleucine from 2-oxobutanoate: step 2/4. It functions in the pathway amino-acid biosynthesis; L-valine biosynthesis; L-valine from pyruvate: step 2/4. In terms of biological role, involved in the biosynthesis of branched-chain amino acids (BCAA). Catalyzes an alkyl-migration followed by a ketol-acid reduction of (S)-2-acetolactate (S2AL) to yield (R)-2,3-dihydroxy-isovalerate. In the isomerase reaction, S2AL is rearranged via a Mg-dependent methyl migration to produce 3-hydroxy-3-methyl-2-ketobutyrate (HMKB). In the reductase reaction, this 2-ketoacid undergoes a metal-dependent reduction by NADPH to yield (R)-2,3-dihydroxy-isovalerate. The polypeptide is Ketol-acid reductoisomerase (NADP(+)) (Brachyspira hyodysenteriae (strain ATCC 49526 / WA1)).